Here is an 84-residue protein sequence, read N- to C-terminus: Kappa-scoloptoxin(11)-Ssm3a (84 aa).

The signal sequence occupies residues 1-16 (MSWMFYSFIVFTLAIK).

This sequence belongs to the scoloptoxin-11 family. Post-translationally, contains 2 disulfide bonds. Expressed by the venom gland.

The protein localises to the secreted. In terms of biological role, inhibits voltage-gated potassium channel currents in DRG neurons. 200 nM of the toxin inhibits current amplitude by only 25% and even at concentrations up to 5 uM, the toxin does not inhibit all potassium currents. In vivo, insects injected with this toxin showed signs of neurotoxicity including twitching, paralysis, and body contraction. This Scolopendra mutilans (Chinese red-headed centipede) protein is Kappa-scoloptoxin(11)-Ssm3a.